A 181-amino-acid chain; its full sequence is Photosystem I assembly protein Ycf4 (181 aa).

A run of 2 helical transmembrane segments spans residues 19-41 and 61-83; these read YAWC…GSYF and IVMM…SIFT.

The protein belongs to the Ycf4 family.

It localises to the plastid. The protein resides in the chloroplast thylakoid membrane. Seems to be required for the assembly of the photosystem I complex. The chain is Photosystem I assembly protein Ycf4 from Guillardia theta (Cryptophyte).